Here is a 123-residue protein sequence, read N- to C-terminus: Thioredoxin H-type (123 aa).

Residues A2–Q119 enclose the Thioredoxin domain. A disulfide bridge links C45 with C48.

This sequence belongs to the thioredoxin family. Plant H-type subfamily.

It is found in the cytoplasm. In terms of biological role, participates in various redox reactions through the reversible oxidation of the active center dithiol to a disulfide. The H form is known to activate a number of cytosolic enzymes. The polypeptide is Thioredoxin H-type (PEC-2) (Brassica campestris (Field mustard)).